The sequence spans 286 residues: Interferon-induced 35 kDa protein (286 aa).

Residues 5–26 (LDAALHALQEEQARLKMRLWDL) form a leucine-zipper region. NID domains lie at 81 to 170 (ALIT…GDVD) and 183 to 266 (FARD…GEVE).

This sequence belongs to the NMI family. Homodimer. Also interacts with BATF. Interacts with TRIM21. Interacts with NMI; the interaction is direct and is facilitated by TRIM21. Phosphorylated. Dephosphorylation correlates with the formation of a complex with NMI. As to expression, expressed in a wide range of cell types, including fibroblasts, macrophages, and epithelial cells.

The protein localises to the cytoplasm. The protein resides in the nucleus. It is found in the secreted. Functionally, acts as a signaling pathway regulator involved in innate immune system response. In response to interferon IFN-alpha, associates in a complex with signaling pathway regulator NMI to regulate immune response; the complex formation prevents proteasome-mediated degradation of IFI35 and correlates with IFI35 dephosphorylation. In complex with NMI, inhibits virus-triggered type I interferon/IFN-beta production. In complex with NMI, negatively regulates nuclear factor NF-kappa-B signaling by inhibiting the nuclear translocation, activation and transcription of the NF-kappa-B subunit p65/RELA, resulting in the inhibition of endothelial cell proliferation, migration and re-endothelialization of injured arteries. Beside its role as an intracellular signaling pathway regulator, also functions extracellularly as damage-associated molecular patterns (DAMPs) to promote inflammation when actively released by macrophage to the extracellular space during cell injury and pathogen invasion. Macrophage-secreted IFI35 activates NF-kappa-B signaling in adjacent macrophages through Toll-like receptor 4/TLR4 activation, thereby inducing NF-kappa-B translocation from the cytoplasm into the nucleus which promotes the release of pro-inflammatory cytokines. The polypeptide is Interferon-induced 35 kDa protein (Homo sapiens (Human)).